A 507-amino-acid chain; its full sequence is 3-oxosteroid 1-dehydrogenase (507 aa).

An FAD-binding site is contributed by 9-38 (DLLVVGSGGGALTGAYTAAAQGLTTIVLEK). Residues 299–385 (GLVVDSPGSV…LPRPDYRPER (87 aa)) are disordered.

Belongs to the FAD-dependent oxidoreductase 2 family. 3-oxosteroid dehydrogenase subfamily. The cofactor is FAD.

Its subcellular location is the cell membrane. It carries out the reaction a 3-oxosteroid + A = a 3-oxo-Delta(1)-steroid + AH2. The protein operates within lipid metabolism; steroid degradation. Catalyzes the elimination of the C-1 and C-2 hydrogen atoms of the A-ring from the polycyclic ring structure of 3-ketosteroids. The protein is 3-oxosteroid 1-dehydrogenase of Rhodococcus opacus (Nocardia opaca).